The sequence spans 1232 residues: Protein transport protein sec-16A.1 (1232 aa).

6 disordered regions span residues 18–134, 172–193, 815–843, 866–942, 972–1069, and 1140–1232; these read GASG…SGYA, RNGF…EEDE, PVQE…KWHD, KPIA…VVPE, QPIP…PQKQ, and PHLM…QNND. Residues 26 to 37 are compositionally biased toward polar residues; the sequence is DWNNPYNASPPS. Low complexity predominate over residues 67 to 76; sequence RPILIQPARP. Positions 78 to 100 are enriched in polar residues; the sequence is SQKSNRQGTGMSNGSRGLNSTFN. The segment covering 817–836 has biased composition (polar residues); sequence QESQQHVPQPQPVENKSISS. A compositionally biased stretch (low complexity) spans 896-914; the sequence is SSVTVAASASRTSTLTSST. Polar residues-rich tracts occupy residues 1046–1060, 1149–1159, and 1168–1178; these read QQAT…NAKT, SNKSSTNSLRS, and YLQSGMATSQA. The segment covering 1194–1203 has biased composition (low complexity); it reads PMSFSFMPAP. The segment covering 1222 to 1232 has biased composition (polar residues); the sequence is PSESLSKQNND.

This sequence belongs to the SEC16 family. As to quaternary structure, interacts with tfg-1 (via N-terminus); the interaction is direct and is required for both the localization of tfg-1 and to maintain the distribution of sec-16A.1 at endoplasmic reticulum exit sites (ERES).

The protein localises to the endoplasmic reticulum. The protein resides in the endoplasmic reticulum-Golgi intermediate compartment. Its function is as follows. Plays a role in the organization of the endoplasmic reticulum exit sites (ERES), also known as transitional endoplasmic reticulum (tER). In association with tfg-1, accumulates at ERES to positively regulate secretory cargo trafficking from the endoplasmic reticulum to the endoplasmic reticulum-Golgi intermediate compartment (ERGIC) and Golgi apparatus. The polypeptide is Protein transport protein sec-16A.1 (Caenorhabditis elegans).